A 957-amino-acid chain; its full sequence is SH3 domain-binding protein 4 (957 aa).

The region spanning 54-113 (DNVKEVVAIKDYCPNNFTTLKFSKGEHLYVLDTSGGEWWYAHNTTEMGYIPSSYVQPLNY) is the SH3 1 domain. Positions 312–449 (TSIVCRLDSS…LEPVMYVVMV (138 aa)) constitute a ZU5 domain. Positions 649–719 (TSLKYGKLLK…HAKNVLVVGK (71 aa)) constitute an SH3 2 domain.

As to quaternary structure, homodimer or homooligomer.

The protein localises to the membrane. It is found in the clathrin-coated pit. The protein resides in the cytoplasmic vesicle. Its subcellular location is the clathrin-coated vesicle. It localises to the nucleus. Possible role in regulating endocytosis of the transferrin receptor at the plasma membrane. Alternatively, may function as a negative regulator of the amino acid-induced TOR signaling by inhibiting the formation of active Rag GTPase complexes. Preferentially binds inactive Rag GTPase complexes and prevents their interaction with the mTORC1 complex inhibiting its relocalization to lysosomes and its activation. Thereby, may indirectly regulate cell growth, proliferation and autophagy. The sequence is that of SH3 domain-binding protein 4 (sh3bp4) from Xenopus tropicalis (Western clawed frog).